The following is a 471-amino-acid chain: Rho GTPase-activating protein 15 (471 aa).

Residues 1–20 (MQKSTNSDIPVETLNPTRQG) form a disordered region. Ser-43 carries the post-translational modification Phosphoserine. The PH domain occupies 79–189 (MVEKEGYLQK…WFHAIKNAID (111 aa)). Phosphoserine is present on residues Ser-196, Ser-199, and Ser-243. A Rho-GAP domain is found at 281 to 470 (SHLHTLCERE…LMLSAYDQIF (190 aa)).

The protein localises to the cytoplasm. It localises to the membrane. GTPase activator for the Rho-type GTPases by converting them to an inactive GDP-bound state. Has activity toward RAC1. Overexpression results in an increase in actin stress fibers and cell contraction. The protein is Rho GTPase-activating protein 15 (ARHGAP15) of Bos taurus (Bovine).